The chain runs to 376 residues: Polygalacturonase (376 aa).

The signal sequence occupies residues 1–20 (MASSLKLGLIALLGATAVNA). Residues cysteine 39 and cysteine 57 are joined by a disulfide bond. One copy of the PbH1 1 repeat lies at 170–208 (AKELTLSGITVDTADGDSNGGHNTDAFDVGSSNGVYITS). The active-site Proton donor is the aspartate 215. An intrachain disulfide couples cysteine 217 to cysteine 233. 4 PbH1 repeats span residues 223-243 (GTNVHFTGAQCTGGHGISIGS), 252-273 (VDGVTVESCTIKDSDNGVRIKT), 281-303 (VQGVTYKDITLSGIAKYGIVIEQ), and 315-360 (TSGV…SITG). The active site involves histidine 237. 2 disulfide bridges follow: cysteine 343-cysteine 348 and cysteine 367-cysteine 376.

Belongs to the glycosyl hydrolase 28 family.

It is found in the secreted. It carries out the reaction (1,4-alpha-D-galacturonosyl)n+m + H2O = (1,4-alpha-D-galacturonosyl)n + (1,4-alpha-D-galacturonosyl)m.. The polypeptide is Polygalacturonase (PGG1) (Penicillium griseoroseum).